The sequence spans 178 residues: Protein GrpE (178 aa).

This sequence belongs to the GrpE family. Homodimer.

It is found in the cytoplasm. Functionally, participates actively in the response to hyperosmotic and heat shock by preventing the aggregation of stress-denatured proteins, in association with DnaK and GrpE. It is the nucleotide exchange factor for DnaK and may function as a thermosensor. Unfolded proteins bind initially to DnaJ; upon interaction with the DnaJ-bound protein, DnaK hydrolyzes its bound ATP, resulting in the formation of a stable complex. GrpE releases ADP from DnaK; ATP binding to DnaK triggers the release of the substrate protein, thus completing the reaction cycle. Several rounds of ATP-dependent interactions between DnaJ, DnaK and GrpE are required for fully efficient folding. The protein is Protein GrpE of Rickettsia typhi (strain ATCC VR-144 / Wilmington).